A 509-amino-acid chain; its full sequence is Cysteine--tRNA ligase (509 aa).

C19 serves as a coordination point for Zn(2+). The 'HIGH' region motif lies at 21–31 (PTVYNDAHIGH). Zn(2+) is bound by residues C213, H238, and E242. The 'KMSKS' region signature appears at 284–288 (KMSKS). K287 contributes to the ATP binding site.

It belongs to the class-I aminoacyl-tRNA synthetase family. It depends on Zn(2+) as a cofactor.

The enzyme catalyses tRNA(Cys) + L-cysteine + ATP = L-cysteinyl-tRNA(Cys) + AMP + diphosphate. The protein is Cysteine--tRNA ligase (CARS) of Acanthamoeba polyphaga (Amoeba).